A 792-amino-acid chain; its full sequence is Cullin-4 (792 aa).

Residues 1–10 show a composition bias toward polar residues; the sequence is MSLPTKRSTF. A disordered region spans residues 1 to 43; that stretch reads MSLPTKRSTFSAASASDDSSYSSPPMKKAKNDLHHSPQHPNTA. The span at 11 to 23 shows a compositional bias: low complexity; sequence SAASASDDSSYSS. Residues 724–784 enclose the Cullin neddylation domain; that stretch reads DRQYQIDAAI…REYLEREKSN (61 aa). Lys738 is covalently cross-linked (Glycyl lysine isopeptide (Lys-Gly) (interchain with G-Cter in NEDD8)).

The protein belongs to the cullin family. Interacts with COP10, CSN3, CSN4, CSN5, CSN8, DDB1A, DDB1B, DDB2, DET1 and RBX1. Post-translationally, neddylated (rubylated). Deneddylated via its interaction with the COP9 signalosome (CSN) complex. Ubiquitous.

The protein localises to the nucleus. The protein operates within protein modification; protein ubiquitination. In terms of biological role, component of the CUL4-RBX1-CDD (COP10-DDB1a-DET1) E3 ubiquitin-protein ligase complex which mediates the ubiquitination and subsequent proteasomal degradation of target proteins. Participates in the CDD complex to light-mediated control of development. May repress photomorphogenesis through enhancing COP1 E3 ubiquitin-protein ligase activity. Acts together with the CUL4-DDB1-COP1-SPA E3 ubiquitin-protein ligase complexes in the repression of photomorphogenesis and flowering time. Component ot the CUL4-RBX1-DDB1-PRL1 E3 ubiquitin-protein ligase complex which mediates ubiquitination and subsequent degradation of AKIN10. Component of the CUL4-RBX1-DDB1-DWA1/DWA2 E3 ubiquitin-protein ligase complex that acts as a negative regulator in abscisic acid (ABA) signaling and may target ABI5 for degradation. This is Cullin-4 (CUL4) from Arabidopsis thaliana (Mouse-ear cress).